A 110-amino-acid polypeptide reads, in one-letter code: Glutaredoxin-2 (110 aa).

One can recognise a Glutaredoxin domain in the interval 6–106 (KAFVEKAISN…KMIAELKENK (101 aa)). An intrachain disulfide couples Cys-26 to Cys-29.

The protein belongs to the glutaredoxin family.

Functionally, the disulfide bond functions as an electron carrier in the glutathione-dependent synthesis of deoxyribonucleotides by the enzyme ribonucleotide reductase. In addition, it is also involved in reducing some disulfides in a coupled system with glutathione reductase. Thioltransferase catalyzes cellular thiol-disulfide transhydrogenation reactions. It transfers reducing equivalents to cytosolic protein and nonprotein disulfides. The chain is Glutaredoxin-2 (grx2) from Schizosaccharomyces pombe (strain 972 / ATCC 24843) (Fission yeast).